Reading from the N-terminus, the 246-residue chain is Ly6/PLAUR domain-containing protein 4 (246 aa).

The first 26 residues, 1 to 26, serve as a signal peptide directing secretion; sequence MGPQHLSPMQLLCLLGAISSLPWAEA. N-linked (GlcNAc...) asparagine glycosylation is present at Asn-117. The UPAR/Ly6 domain occupies 142–223; it reads CPTCVGEHSK…INIVEKALFT (82 aa). Ala-225 carries GPI-anchor amidated alanine lipidation. The propeptide at 226–246 is removed in mature form; the sequence is GTPCRSPSWGILLGLLFAFKG.

It is found in the cell membrane. The protein is Ly6/PLAUR domain-containing protein 4 (LYPD4) of Bos taurus (Bovine).